A 118-amino-acid chain; its full sequence is Small ribosomal subunit protein uS13 (118 aa).

Positions 94 to 118 are disordered; that stretch reads GLPLRGQRTKTNARTRKGPRKPIRK.

Belongs to the universal ribosomal protein uS13 family. Part of the 30S ribosomal subunit. Forms a loose heterodimer with protein S19. Forms two bridges to the 50S subunit in the 70S ribosome.

Located at the top of the head of the 30S subunit, it contacts several helices of the 16S rRNA. In the 70S ribosome it contacts the 23S rRNA (bridge B1a) and protein L5 of the 50S subunit (bridge B1b), connecting the 2 subunits; these bridges are implicated in subunit movement. Contacts the tRNAs in the A and P-sites. This is Small ribosomal subunit protein uS13 from Alcanivorax borkumensis (strain ATCC 700651 / DSM 11573 / NCIMB 13689 / SK2).